The following is a 704-amino-acid chain: 1,4-alpha-glucan-branching enzyme (704 aa).

Positions 94 and 131 each coordinate (1,4-alpha-D-glucosyl)n. S190 is modified (phosphoserine). Residue D356 is the Nucleophile of the active site. E417 (proton donor) is an active-site residue.

It belongs to the glycosyl hydrolase 13 family. GlgB subfamily.

Its subcellular location is the cytoplasm. The enzyme catalyses Transfers a segment of a (1-&gt;4)-alpha-D-glucan chain to a primary hydroxy group in a similar glucan chain.. Its pathway is glycan biosynthesis; glycogen biosynthesis. Its function is as follows. Glycogen-branching enzyme participates in the glycogen biosynthetic process along with glycogenin and glycogen synthase. Generates alpha-1,6-glucosidic branches from alpha-1,4-linked glucose chains, to increase solubility of the glycogen polymer. This Saccharomyces cerevisiae (strain ATCC 204508 / S288c) (Baker's yeast) protein is 1,4-alpha-glucan-branching enzyme (GLC3).